The following is a 142-amino-acid chain: Large-conductance mechanosensitive channel (142 aa).

A run of 2 helical transmembrane segments spans residues 10–30 (FAIK…AAFS) and 86–106 (GNFI…FLMV).

This sequence belongs to the MscL family. As to quaternary structure, homopentamer.

Its subcellular location is the cell inner membrane. Its function is as follows. Channel that opens in response to stretch forces in the membrane lipid bilayer. May participate in the regulation of osmotic pressure changes within the cell. This is Large-conductance mechanosensitive channel from Polaromonas naphthalenivorans (strain CJ2).